The primary structure comprises 218 residues: Pyridoxine/pyridoxamine 5'-phosphate oxidase (218 aa).

Residues 12 to 15 and Arg-70 contribute to the substrate site; that span reads RMSY. Residues 65-70, 80-81, Lys-87, and Gln-109 contribute to the FMN site; these read RTVLLR and YT. Residues Tyr-127, Arg-131, and Ser-135 each contribute to the substrate site. FMN contacts are provided by residues 145–146 and Trp-191; that span reads QS. 197-199 lines the substrate pocket; the sequence is RLH. Arg-201 serves as a coordination point for FMN.

Belongs to the pyridoxamine 5'-phosphate oxidase family. In terms of assembly, homodimer. FMN is required as a cofactor.

The enzyme catalyses pyridoxamine 5'-phosphate + O2 + H2O = pyridoxal 5'-phosphate + H2O2 + NH4(+). It catalyses the reaction pyridoxine 5'-phosphate + O2 = pyridoxal 5'-phosphate + H2O2. It functions in the pathway cofactor metabolism; pyridoxal 5'-phosphate salvage; pyridoxal 5'-phosphate from pyridoxamine 5'-phosphate: step 1/1. Its pathway is cofactor metabolism; pyridoxal 5'-phosphate salvage; pyridoxal 5'-phosphate from pyridoxine 5'-phosphate: step 1/1. Its function is as follows. Catalyzes the oxidation of either pyridoxine 5'-phosphate (PNP) or pyridoxamine 5'-phosphate (PMP) into pyridoxal 5'-phosphate (PLP). In Acinetobacter baylyi (strain ATCC 33305 / BD413 / ADP1), this protein is Pyridoxine/pyridoxamine 5'-phosphate oxidase.